The sequence spans 120 residues: Large ribosomal subunit protein uL18 (120 aa).

Part of the 50S ribosomal subunit; part of the 5S rRNA/L5/L18/L25 subcomplex. Contacts the 5S and 23S rRNAs.

Functionally, this is one of the proteins that bind and probably mediate the attachment of the 5S RNA into the large ribosomal subunit, where it forms part of the central protuberance. The polypeptide is Large ribosomal subunit protein uL18 (Rhodopseudomonas palustris (strain ATCC BAA-98 / CGA009)).